Reading from the N-terminus, the 233-residue chain is B-cell lymphoma/leukemia 10 (233 aa).

The residue at position 1 (Met1) is an N-acetylmethionine. The 89-residue stretch at 13-101 folds into the CARD domain; sequence LTEVKKDALE…QNFLIQKITD (89 aa). Residues Lys17, Lys31, and Lys63 each participate in a glycyl lysine isopeptide (Lys-Gly) (interchain with G-Cter in ubiquitin) cross-link. Ser138 bears the Phosphoserine mark. Residues 187 to 233 are disordered; that stretch reads FSSTTLPRPGDPGAPPLPPDLQLEEEGTCANSSEMFLPLRSRTVSRQ. Residues 195 to 205 show a composition bias toward pro residues; sequence PGDPGAPPLPP.

As to quaternary structure, homomultimer; homooligomerized following recruitment by CARD domain-containing proteins that form a nucleating helical template that recruits BCL10 via CARD-CARD interaction. Self-associates by CARD-CARD interaction and interacts with other CARD-proteins such as CARD9, CARD10, CARD11 and CARD14. Forms a complex with CARD14 and MALT1; resulting in the formation of a CBM (CARD14-BCL10-MALT1) complex. Forms a complex with CARD11 and MALT1; resulting in the formation of a CBM (CARD11-BCL10-MALT1) complex. Forms a complex with CARD9 and MALT1; resulting in the formation of a CBM (CARD9-BCL10-MALT1) complex. Found in a membrane raft complex, at least composed of BCL10, CARD11, DPP4 and IKBKB. Binds caspase-9 with its C-terminal domain. Interacts with TRAF2 and BIRC2/c-IAP2. Interacts with PELI2 and SOCS3; these interactions may be mutually exclusive. Phosphorylated. Phosphorylation results in dissociation from TRAF2 and binding to BIRC2/c-IAP2. Phosphorylated by IKBKB/IKKB. In terms of processing, ubiquitinated via both 'Lys-63'-linked and linear ('Met-1'-linked) polyubiquitin chains in response to T-cell receptor (TCR) activation. Ubiquitination is recognized by IKBKG/NEMO, the regulatory subunit of I-kappa-B kinase (IKK), and is required for TCR-induced NF-kappa-B activation. Linear ubiquitination at Lys-17, Lys-31 and Lys-63 is mediated by RNF31/HOIP; linear ubiquitination is recognized with much higher affinity than 'Lys-63'-linked ubiquitin by IKBKG/NEMO. CARD11 is required for linear ubiquitination by HOIP by promoting the targeting of BCL10 to RNF31/HOIP. Post-translationally, proteolytically cleaved by MALT1; required for T-cell activation. In terms of tissue distribution, ubiquitous.

The protein localises to the cytoplasm. It is found in the perinuclear region. Its subcellular location is the membrane raft. Functionally, plays a key role in both adaptive and innate immune signaling by bridging CARD domain-containing proteins to immune activation. Acts by channeling adaptive and innate immune signaling downstream of CARD domain-containing proteins CARD9, CARD11 and CARD14 to activate NF-kappa-B and MAP kinase p38 (MAPK11, MAPK12, MAPK13 and/or MAPK14) pathways which stimulate expression of genes encoding pro-inflammatory cytokines and chemokines. Recruited by activated CARD domain-containing proteins: homooligomerized CARD domain-containing proteins form a nucleating helical template that recruits BCL10 via CARD-CARD interaction, thereby promoting polymerization of BCL10, subsequent recruitment of MALT1 and formation of a CBM complex. This leads to activation of NF-kappa-B and MAP kinase p38 (MAPK11, MAPK12, MAPK13 and/or MAPK14) pathways which stimulate expression of genes encoding pro-inflammatory cytokines and chemokines. Activated by CARD9 downstream of C-type lectin receptors; CARD9-mediated signals are essential for antifungal immunity. Activated by CARD11 downstream of T-cell receptor (TCR) and B-cell receptor (BCR). Promotes apoptosis, pro-caspase-9 maturation and activation of NF-kappa-B via NIK and IKK. This chain is B-cell lymphoma/leukemia 10, found in Homo sapiens (Human).